The following is an 80-amino-acid chain: Putative membrane protein insertion efficiency factor (80 aa).

The tract at residues 61–80 (KTGKDPVPDHFSLKRNQEGE) is disordered. The span at 62 to 80 (TGKDPVPDHFSLKRNQEGE) shows a compositional bias: basic and acidic residues.

The protein belongs to the UPF0161 family.

The protein resides in the cell membrane. Functionally, could be involved in insertion of integral membrane proteins into the membrane. The polypeptide is Putative membrane protein insertion efficiency factor (Streptococcus pneumoniae (strain 70585)).